The chain runs to 436 residues: Putative actin-fragmin kinase DDB_G0268748 (436 aa).

The disordered stretch occupies residues 14-58 (DKNIDSGSSSSNIGGSSSNSSGTTNKRSSGNFNGSSASSSPSSST). Positions 18-57 (DSGSSSSNIGGSSSNSSGTTNKRSSGNFNGSSASSSPSSS) are enriched in low complexity.

Belongs to the protein kinase superfamily. AFK Ser/Thr protein kinase family.

This Dictyostelium discoideum (Social amoeba) protein is Putative actin-fragmin kinase DDB_G0268748.